Consider the following 561-residue polypeptide: MDGDIEHLLFIYALQNAVKHDSAPKSGTVIGTVLGKHPEFRSRARELGPLAGKAVAQVGKMSAADRKSRLEALAPELLAELTETHEHVRKLPDLEGAENGVVMRFAPNPSGPLHLGHARASILNDYYVRRYGGRYVLRVEDTDPKRVDPDAYAMVLEDVEWLGLGITDIVYQSDRLDIYYDWCRKLIELGGAYVCVCDSERFRELKLKGKACPCRELTVEENLELWQQMLDGEFYEGDVTVRVKTDLAHPDPAMRDYSAMRIVNAPLHPRVDATVFPLMNFSVAVDDHLLGITHVIRGKDHIANTRRQRYIFDYFGWKPPVYRHYGRMGISGVVLSTSGMREGINSGLYTGWDDIHLGTMRAIARRGIEPEAVRNAMVDIGIGETDISFSWENLYSRNKELVDPKANRYFFVPDPVEVTVEGAPRREAHAALHPNDPSRGVRTLVAEEAILLPRADIEGKSMVRLKDLYNVKIAWDGDTPRVSYAGDSLEEARHEKAPIIQWLPADAKLPCTLLRQDGSLEGFCEPLVAGETDRVVQFERIGFARIDSADGGRVSAYFAHR.

The 'HIGH' region motif lies at P107 to H117.

It belongs to the class-I aminoacyl-tRNA synthetase family. Glutamate--tRNA ligase type 2 subfamily.

It localises to the cytoplasm. It carries out the reaction tRNA(Glu) + L-glutamate + ATP = L-glutamyl-tRNA(Glu) + AMP + diphosphate. In terms of biological role, catalyzes the attachment of glutamate to tRNA(Glu) in a two-step reaction: glutamate is first activated by ATP to form Glu-AMP and then transferred to the acceptor end of tRNA(Glu). This chain is Glutamate--tRNA ligase, found in Methanoculleus marisnigri (strain ATCC 35101 / DSM 1498 / JR1).